The sequence spans 107 residues: Thioredoxin-1 (107 aa).

A Thioredoxin domain is found at alanine 2 to lysine 106. Residues cysteine 31 and cysteine 34 each act as nucleophile in the active site. Residues cysteine 31 and cysteine 34 are joined by a disulfide bond.

The protein belongs to the thioredoxin family. As to expression, ovary specific. Expressed present in the nurse cells from stage 9 of ovary development and is transported into the oocyte. Expressed throughout oogenesis.

The protein resides in the nucleus. Its function is as follows. Participates in various redox reactions through the reversible oxidation of its active center dithiol to a disulfide and catalyzes dithiol-disulfide exchange reactions. As a reducing substrate of peroxiredoxin 1, thioredoxin 2 is preferred over thioredoxin 1. Required for female meiosis and early embryonic development. This Drosophila melanogaster (Fruit fly) protein is Thioredoxin-1 (dhd).